Reading from the N-terminus, the 354-residue chain is Uroporphyrinogen decarboxylase (354 aa).

Residues R27–R31, D77, Y154, T209, and H327 each bind substrate.

Belongs to the uroporphyrinogen decarboxylase family. As to quaternary structure, homodimer.

The protein localises to the cytoplasm. It catalyses the reaction uroporphyrinogen III + 4 H(+) = coproporphyrinogen III + 4 CO2. It participates in porphyrin-containing compound metabolism; protoporphyrin-IX biosynthesis; coproporphyrinogen-III from 5-aminolevulinate: step 4/4. In terms of biological role, catalyzes the decarboxylation of four acetate groups of uroporphyrinogen-III to yield coproporphyrinogen-III. The chain is Uroporphyrinogen decarboxylase from Escherichia coli (strain 55989 / EAEC).